The sequence spans 590 residues: Myo-inositol transporter 3 (590 aa).

The span at Met1–Glu26 shows a compositional bias: basic and acidic residues. The tract at residues Met1–Phe40 is disordered. At Met1 to Lys57 the chain is on the cytoplasmic side. The chain crosses the membrane as a helical span at residues Val58–Tyr78. At Asp79–Glu105 the chain is on the extracellular side. An N-linked (GlcNAc...) asparagine glycan is attached at Asn100. The helical transmembrane segment at Ile106 to Gly126 threads the bilayer. The Cytoplasmic portion of the chain corresponds to Asp127 to Lys132. Residues Met133–Tyr153 form a helical membrane-spanning segment. Topologically, residues Ser154–Gln157 are extracellular. Residues Ile158–Leu178 traverse the membrane as a helical segment. The Cytoplasmic segment spans residues Phe179–Cys192. Residues Ile193–Gly213 form a helical membrane-spanning segment. The Extracellular portion of the chain corresponds to Val214–Arg222. Residues Leu223 to Pro243 form a helical membrane-spanning segment. Over Glu244–Gln325 the chain is Cytoplasmic. A helical membrane pass occupies residues Leu326–Ser346. Topologically, residues Asn347–Ala349 are extracellular. Residues Leu350–Val370 traverse the membrane as a helical segment. The Cytoplasmic portion of the chain corresponds to Asp371 to Arg376. The helical transmembrane segment at Gly377–Phe397 threads the bilayer. The Extracellular portion of the chain corresponds to Tyr398–Gly420. The helical transmembrane segment at Ile421–Val441 threads the bilayer. At Trp442–Met455 the chain is on the cytoplasmic side. A helical membrane pass occupies residues Gly456–Leu476. Residues Ser477–Ser485 lie on the Extracellular side of the membrane. A helical transmembrane segment spans residues Gly486–Phe506. At Pro507–Val590 the chain is on the cytoplasmic side.

It belongs to the major facilitator superfamily. Sugar transporter (TC 2.A.1.1) family.

It is found in the cell membrane. The enzyme catalyses myo-inositol(out) + H(+)(out) = myo-inositol(in) + H(+)(in). Its function is as follows. Transporter for myo-inositol. The polypeptide is Myo-inositol transporter 3 (Cryptococcus neoformans var. grubii serotype A (strain H99 / ATCC 208821 / CBS 10515 / FGSC 9487) (Filobasidiella neoformans var. grubii)).